Reading from the N-terminus, the 194-residue chain is Outer-membrane lipoprotein LolB (194 aa).

The N-terminal stretch at 1 to 18 (MTLFLRIFTFGCLLLLAG) is a signal peptide. Cys-19 is lipidated: N-palmitoyl cysteine. Cys-19 is lipidated: S-diacylglycerol cysteine.

This sequence belongs to the LolB family. As to quaternary structure, monomer.

It localises to the cell outer membrane. Its function is as follows. Plays a critical role in the incorporation of lipoproteins in the outer membrane after they are released by the LolA protein. The chain is Outer-membrane lipoprotein LolB from Aeromonas salmonicida (strain A449).